Here is a 296-residue protein sequence, read N- to C-terminus: Protein RarD (296 aa).

Topologically, residues 1-11 (MDAKQTRQGVL) are cytoplasmic. The chain crosses the membrane as a helical span at residues 12-34 (LALAAYFIWGIAPAYFKLIYYVP). An EamA domain is found at 18–145 (FIWGIAPAYF…AICGVLVQLW (128 aa)). Residues 35-37 (ADE) are Periplasmic-facing. Residues 38-60 (ILTHRVIWSFFFMVVLMSICRQW) form a helical membrane-spanning segment. At 61–72 (SYLKTLIQTPQK) the chain is on the cytoplasmic side. Residues 73–95 (IFMLAVSAVLIGGNWLLFIWAVN) form a helical membrane-spanning segment. Residues 96-99 (NHHM) are Periplasmic-facing. Residues 100-122 (LEASLGYFINPLVNIVLGMIFLG) traverse the membrane as a helical segment. Topologically, residues 123 to 128 (ERFRRM) are cytoplasmic. Residues 129–146 (QWLAVILAICGVLVQLWT) traverse the membrane as a helical segment. Topologically, residues 147–149 (FGS) are periplasmic. The helical transmembrane segment at 150–167 (LPIIALGLAFSFAFYGLV) threads the bilayer. Residues 168 to 179 (RKKIAVEAQTGM) are Cytoplasmic-facing. A helical transmembrane segment spans residues 180–197 (LIETMWLLPVAAIYLFAI). Residues 198–211 (ADSSTSHMGQNPMS) are Periplasmic-facing. Residues 212-234 (LNLLLIAAGIVTTVPLLCFTAAA) form a helical membrane-spanning segment. At 235 to 238 (TRLR) the chain is on the cytoplasmic side. Residues 239-261 (LSTLGFFQYIGPTLMFLLAVTFY) traverse the membrane as a helical segment. Topologically, residues 262–270 (GEKPGADKM) are periplasmic. A helical transmembrane segment spans residues 271–290 (VTFAFIWVALAIFVMDAIYT). The Cytoplasmic segment spans residues 291–296 (QRRTSK).

The protein belongs to the EamA transporter family.

It is found in the cell inner membrane. This is Protein RarD (rarD) from Escherichia coli (strain K12).